Reading from the N-terminus, the 90-residue chain is MRLYACCGLLLCPAYPQHFAHGYVDKIPGYPGRAGTLTGLHPMQVCRCRRPPHPVTFRRFSSTRCGFGAAPAFVCGRPVTGAARPDGGRM.

This is an uncharacterized protein from Escherichia coli (strain K12).